The primary structure comprises 162 residues: NADH-quinone oxidoreductase subunit I (162 aa).

4Fe-4S ferredoxin-type domains lie at L53–E83 and T93–V122. [4Fe-4S] cluster contacts are provided by C63, C66, C69, C73, C102, C105, C108, and C112.

It belongs to the complex I 23 kDa subunit family. In terms of assembly, NDH-1 is composed of 14 different subunits. Subunits NuoA, H, J, K, L, M, N constitute the membrane sector of the complex. The cofactor is [4Fe-4S] cluster.

The protein resides in the cell inner membrane. It catalyses the reaction a quinone + NADH + 5 H(+)(in) = a quinol + NAD(+) + 4 H(+)(out). Functionally, NDH-1 shuttles electrons from NADH, via FMN and iron-sulfur (Fe-S) centers, to quinones in the respiratory chain. The immediate electron acceptor for the enzyme in this species is believed to be ubiquinone. Couples the redox reaction to proton translocation (for every two electrons transferred, four hydrogen ions are translocated across the cytoplasmic membrane), and thus conserves the redox energy in a proton gradient. In Nitrosomonas eutropha (strain DSM 101675 / C91 / Nm57), this protein is NADH-quinone oxidoreductase subunit I.